The following is a 156-amino-acid chain: UPF0266 membrane protein NT01EI_1718 (156 aa).

The next 3 helical transmembrane spans lie at 6-26, 46-63, and 67-87; these read IALL…EAIM, DSLI…RNIS, and APFT…IFYL.

It belongs to the UPF0266 family.

It is found in the cell inner membrane. This chain is UPF0266 membrane protein NT01EI_1718, found in Edwardsiella ictaluri (strain 93-146).